We begin with the raw amino-acid sequence, 565 residues long: UV-stimulated scaffold protein A homolog (565 aa).

The VHS-like stretch occupies residues 11-156 (RKNLNRILQE…VTLRKTKFVD (146 aa)). Positions 155-215 (VDYENGEKKI…ELETTMEMLV (61 aa)) form a coiled coil. A UVSSA-type zinc finger spans residues 441-468 (DRECLAKLPSGALCKRKDMFKCPLHGPL). Zn(2+) is bound by residues cysteine 444, cysteine 454, cysteine 462, and histidine 465. Positions 480–510 (DEDRLKEIDRKERKRLKEAEEFSRKIVKEYE) form a coiled coil. Disordered regions lie at residues 510 to 530 (ESKT…SRLQ) and 542 to 565 (VSAD…FSHL).

Belongs to the UVSSA family.

Its subcellular location is the chromosome. Factor involved in transcription-coupled nucleotide excision repair (TC-NER) in response to UV damage. TC-NER allows RNA polymerase II-blocking lesions to be rapidly removed from the transcribed strand of active genes. This chain is UV-stimulated scaffold protein A homolog, found in Caenorhabditis briggsae.